Here is a 419-residue protein sequence, read N- to C-terminus: GTPase Obg (419 aa).

An Obg domain is found at 1–158 (MHFVDEAFNE…FKIKTELKVL (158 aa)). The 166-residue stretch at 159–324 (ADIGLLGFPS…LKYKMSSFLQ (166 aa)) folds into the OBG-type G domain. GTP contacts are provided by residues 165–172 (GFPSVGKS), 190–194 (FTTIK), 211–214 (DLPG), 278–281 (NKMD), and 305–307 (SLV). Mg(2+)-binding residues include Ser172 and Thr192. The region spanning 342–419 (TLTDNLKTIS…KICDRLFDFL (78 aa)) is the OCT domain.

It belongs to the TRAFAC class OBG-HflX-like GTPase superfamily. OBG GTPase family. In terms of assembly, monomer. The cofactor is Mg(2+).

The protein resides in the cytoplasm. An essential GTPase which binds GTP, GDP and possibly (p)ppGpp with moderate affinity, with high nucleotide exchange rates and a fairly low GTP hydrolysis rate. Plays a role in control of the cell cycle, stress response, ribosome biogenesis and in those bacteria that undergo differentiation, in morphogenesis control. The sequence is that of GTPase Obg from Aster yellows witches'-broom phytoplasma (strain AYWB).